Consider the following 503-residue polypeptide: MSIKAEEISSLIKQQLEHYDDKLDINEVGVVTYVGDGIARAHGLNNALAGELLKFDNGSYGIAQNLDSSDVGIIILGQFDNIREGDRVQRTGRIMSVPVGDALIGRVVNPLGQPVDGLGEIKSDKTRPIEEKAPGVMDRQSVNQPLQTGIKAIDALVPIGRGQRELIIGDRKTGKTSLAIDTILNQKNQDVICIYVAIGQKESTVRTQVETLKRFGAMDYTIVVEAGPSEPAPMLYIAPYAGTAMGEEFMYNGKDVLIVFDDLSKQAVAYRELSLLLRRPPGREAYPGDVFYLHSRLLERSAKLSDKLGGGSLTALPIIQTEAGDISAYIPTNVISITDGQIFLQSDLFFAGTRPAIDAGNSVSRVGGNAQIKAMKKVAGTLRTDLAAYRELESFAQFGSDLDQATQAKLNRGQRTVEVLKQPLHDPIPVEKQVLILYALTHGYLDSIPVEDISRFQNELFDNFDSSHADLLKTIRETGKLPDDKKLSAAIEEFSESFAPSEK.

169-176 (GDRKTGKT) contributes to the ATP binding site.

Belongs to the ATPase alpha/beta chains family. In terms of assembly, F-type ATPases have 2 components, CF(1) - the catalytic core - and CF(0) - the membrane proton channel. CF(1) has five subunits: alpha(3), beta(3), gamma(1), delta(1), epsilon(1). CF(0) has three main subunits: a(1), b(2) and c(9-12). The alpha and beta chains form an alternating ring which encloses part of the gamma chain. CF(1) is attached to CF(0) by a central stalk formed by the gamma and epsilon chains, while a peripheral stalk is formed by the delta and b chains.

The protein resides in the cell membrane. The catalysed reaction is ATP + H2O + 4 H(+)(in) = ADP + phosphate + 5 H(+)(out). Produces ATP from ADP in the presence of a proton gradient across the membrane. The alpha chain is a regulatory subunit. This is ATP synthase subunit alpha from Lactobacillus helveticus (strain DPC 4571).